We begin with the raw amino-acid sequence, 388 residues long: RKLKTGTASVAVALTVVGAGLASQTEVKANRADDARNEVLRGNLVRAELWYRQIQENDQLKLENKGLKTDLREKEEELQGLKDDVEKLTADAELQRLKNERHEEAELERLKSERHDHDKKEAERKALEDKLADKQEHLNGALRYINEKEAEAKEKEAEQKKLKEEKQISDASRQGLRRDLDASREAKKQVEKDLANLTAELDKVKEEKQISDASRQGLRRDLDASREAKKQVEKGLANLTAELDKVKEEKQISDASRQGLRRDLDASREAKKQVEKALEEANSKLAALEKLNKELEESKKLTEKEKAELQAKLEAEAKALKEQLAKQAEELAKLRAEKASDSQTPDAKPGNKAVPGKGQAPQAGTKPNQNKAPMKETKRQLPSTGETT.

An N-terminal signal peptide occupies residues 1-29; it reads RKLKTGTASVAVALTVVGAGLASQTEVKA. Residues 85–113 are able to bind plasminogen; the sequence is VEKLTADAELQRLKNERHEEAELERLKSE. The stretch at 91–103 is one A-1 repeat; it reads DAELQRLKNERHE. Residues 91 to 116 are 2 X approximate tandem repeats, type a; sequence DAELQRLKNERHEEAELERLKSERHD. 5 stretches are compositionally biased toward basic and acidic residues: residues 95 to 137, 145 to 168, 176 to 189, 218 to 231, and 260 to 269; these read QRLK…KQEH, INEK…EKQI, LRRD…AKKQ, and LRRDLDASRE. Disordered regions lie at residues 95 to 189, 204 to 231, and 248 to 269; these read QRLK…AKKQ, VKEE…AKKQ, and EEKQ…ASRE. One copy of the A-2 repeat lies at 104-116; sequence EAELERLKSERHD. A B-1 repeat occupies 147–153; the sequence is EKEAEAK. The 2 X tandem repeats, type b stretch occupies residues 147-161; that stretch reads EKEAEAKEKEAEQKK. A B-2 repeat occupies 154–159; it reads EKEAEQ. C repeat units lie at residues 160–194, 202–236, and 244–278; these read KKLK…EKDL, DKVK…EKGL, and DKVK…EKAL. D repeat units lie at residues 311–316, 317–322, 325–330, and 332–337; these read AKLEAE, AKALKE, AKQAEE, and AKLRAE. A compositionally biased stretch (basic and acidic residues) spans 331–340; sequence LAKLRAEKAS. The segment at 331 to 388 is disordered; that stretch reads LAKLRAEKASDSQTPDAKPGNKAVPGKGQAPQAGTKPNQNKAPMKETKRQLPSTGETT. The LPXTG sorting signal signature appears at 381–385; that stretch reads LPSTG. A Pentaglycyl murein peptidoglycan amidated threonine modification is found at T384. A propeptide spans 385–388 (removed by sortase); that stretch reads GETT.

Belongs to the M protein family.

Its subcellular location is the secreted. The protein localises to the cell wall. In terms of biological role, binds to human plasminogen (and plasmin) via its kringle repeats. Also binds to albumin, immunoglobulin G and fibrinogen. Could provide the bacteria with a mechanism for invasion, as streptococcal-bound plasmin could permit tissue penetration. The polypeptide is Plasminogen-binding group A streptococcal M-like protein PAM (pam) (Streptococcus pyogenes).